The sequence spans 756 residues: Protease KEX1 (756 aa).

The N-terminal stretch at 1 to 24 (MILSSQLMLALIAVSGYGKAMQVP) is a signal peptide. Asparagine 121, asparagine 144, and asparagine 152 each carry an N-linked (GlcNAc...) asparagine glycan. Residues 130-440 (QWHLINPNYP…FGKLDAYNIV (311 aa)) form the Peptidase S8 domain. Active-site charge relay system residues include aspartate 164 and histidine 202. Cystine bridges form between cysteine 218–cysteine 365 and cysteine 310–cysteine 340. The active-site Charge relay system is the serine 373. 2 N-linked (GlcNAc...) asparagine glycosylation sites follow: asparagine 392 and asparagine 538. The 135-residue stretch at 449-583 (VNPQGWLYLP…RLKMFGETID (135 aa)) folds into the P/Homo B domain. A disordered region spans residues 599 to 632 (AEVKSTESKTTTPTAQTSSFTTTSGEETSGANKL). Residues 606–628 (SKTTTPTAQTSSFTTTSGEETSG) are compositionally biased toward low complexity. The chain crosses the membrane as a helical span at residues 641 to 661 (LYLAIFVIGAIVIIIYYLFFL). Positions 715–756 (EEELSPRESSSNNPFGNESLESFDNSPDHTSNLLGQNSIPNK) are disordered. Residues 721–756 (RESSSNNPFGNESLESFDNSPDHTSNLLGQNSIPNK) are compositionally biased toward polar residues.

This sequence belongs to the peptidase S8 family. Furin subfamily. Ca(2+) is required as a cofactor.

It localises to the membrane. Functionally, probably involved in the processing of the precursor of m1-toxin and alpha-factor. The chain is Protease KEX1 (KEX1) from Kluyveromyces lactis (strain ATCC 8585 / CBS 2359 / DSM 70799 / NBRC 1267 / NRRL Y-1140 / WM37) (Yeast).